A 175-amino-acid polypeptide reads, in one-letter code: SsrA-binding protein (175 aa).

This sequence belongs to the SmpB family.

It localises to the cytoplasm. Its function is as follows. Required for rescue of stalled ribosomes mediated by trans-translation. Binds to transfer-messenger RNA (tmRNA), required for stable association of tmRNA with ribosomes. tmRNA and SmpB together mimic tRNA shape, replacing the anticodon stem-loop with SmpB. tmRNA is encoded by the ssrA gene; the 2 termini fold to resemble tRNA(Ala) and it encodes a 'tag peptide', a short internal open reading frame. During trans-translation Ala-aminoacylated tmRNA acts like a tRNA, entering the A-site of stalled ribosomes, displacing the stalled mRNA. The ribosome then switches to translate the ORF on the tmRNA; the nascent peptide is terminated with the 'tag peptide' encoded by the tmRNA and targeted for degradation. The ribosome is freed to recommence translation, which seems to be the essential function of trans-translation. The protein is SsrA-binding protein of Prochlorococcus marinus subsp. pastoris (strain CCMP1986 / NIES-2087 / MED4).